Here is a 401-residue protein sequence, read N- to C-terminus: Elongation factor Tu (401 aa).

In terms of domain architecture, tr-type G spans 10-209 (KPHINVGTIG…AVDEYIPTPQ (200 aa)). The G1 stretch occupies residues 19–26 (GHVDHGKT). Residue 19-26 (GHVDHGKT) participates in GTP binding. T26 lines the Mg(2+) pocket. The segment at 60–64 (GITIA) is G2. The segment at 81 to 84 (DCPG) is G3. Residues 81–85 (DCPGH) and 136–139 (NKVD) contribute to the GTP site. Positions 136 to 139 (NKVD) are G4. The interval 174–176 (SAR) is G5.

Belongs to the TRAFAC class translation factor GTPase superfamily. Classic translation factor GTPase family. EF-Tu/EF-1A subfamily. Monomer.

The protein resides in the cytoplasm. The enzyme catalyses GTP + H2O = GDP + phosphate + H(+). In terms of biological role, GTP hydrolase that promotes the GTP-dependent binding of aminoacyl-tRNA to the A-site of ribosomes during protein biosynthesis. In Chloroflexus aurantiacus (strain ATCC 29366 / DSM 635 / J-10-fl), this protein is Elongation factor Tu.